Consider the following 573-residue polypeptide: MSNEKSPFIVEGKLADNERLKRESNNLRGTITTDLKDDLTGGFTADNFQLIRFHGMYQQDDRDIRAERAKQKLEPLHNVMLRARLPGGVITPDQWLAIDKFADDHTMYGSIRLTTRQTFQFHGVLKPQIKLMHQTLNKVGIDSIATAGDVNRNVLCTSNPVESELHLHAYEWAKKISEHLLPKTRAYAEIWLDGEKVETTEKPVEPILGDNYLPRKFKTTVVIPPQNDVDVHANDLNFVAIAENGQLVGFNVLVGGGLAMTHGDKSTYPRKASDFGFIPLENTLDVAAAVVTTQRDWGNRVNRKNAKTKYTLERVGVDNFKAEVEKRAGVTFQESRPYEFTDRGDRFGWVEGIDGKYHLTVFIENGRILDYPGKTLKTGCAEIAKIHKGDFRLTANQNLIIAGVPPQDKDKIEALAREHGLIAPSISNQRLDSMACVALPTCPLAMAEAERYLPDAVTELEGLLAKHGLEEDSVIFRVTGCPNGCGRAMLSEVGLVGKGPGKYNLHLGGNREGTRIPRMYRENISEQEIMAELDTLLGQWAKERDSGEAFGDYVVRAGVVKPVVDSARDFYDQ.

[4Fe-4S] cluster is bound by residues C436, C442, C481, and C485. C485 serves as a coordination point for siroheme.

The protein belongs to the nitrite and sulfite reductase 4Fe-4S domain family. Alpha(8)-beta(8). The alpha component is a flavoprotein, the beta component is a hemoprotein. Siroheme serves as cofactor. The cofactor is [4Fe-4S] cluster.

It catalyses the reaction hydrogen sulfide + 3 NADP(+) + 3 H2O = sulfite + 3 NADPH + 4 H(+). The protein operates within sulfur metabolism; hydrogen sulfide biosynthesis; hydrogen sulfide from sulfite (NADPH route): step 1/1. Component of the sulfite reductase complex that catalyzes the 6-electron reduction of sulfite to sulfide. This is one of several activities required for the biosynthesis of L-cysteine from sulfate. The chain is Sulfite reductase [NADPH] hemoprotein beta-component from Alteromonas mediterranea (strain DSM 17117 / CIP 110805 / LMG 28347 / Deep ecotype).